The following is a 677-amino-acid chain: High-affinity choline transport protein (677 aa).

12 helical membrane passes run 15-35 (PVVF…TILF), 54-74 (FGWY…CIAC), 94-114 (LSWA…FFSV), 144-164 (FHYG…LGYF), 196-216 (IAAV…GVVQ), 233-253 (AKAA…TSGV), 265-285 (VALA…SFLL), 319-339 (WTLF…LFLA), 350-370 (FVLG…SVFG), 412-432 (VATI…ALVL), 452-472 (VFWS…NGIS), and 477-497 (TTVI…AGLY).

It belongs to the BCCT transporter (TC 2.A.15) family.

The protein resides in the cell inner membrane. The enzyme catalyses choline(in) + H(+)(in) = choline(out) + H(+)(out). It participates in amine and polyamine biosynthesis; betaine biosynthesis via choline pathway. In terms of biological role, high-affinity uptake of choline driven by a proton-motive force. The chain is High-affinity choline transport protein (betT) from Escherichia coli O157:H7.